The following is a 186-amino-acid chain: Ribonuclease M5 (186 aa).

A Toprim domain is found at 6–89; sequence SQVIVVEGRD…AFLKRDEAVP (84 aa). Mg(2+) contacts are provided by Glu-12, Asp-58, and Asp-60.

Belongs to the ribonuclease M5 family. It depends on Mg(2+) as a cofactor.

It localises to the cytoplasm. It catalyses the reaction Endonucleolytic cleavage of RNA, removing 21 and 42 nucleotides, respectively, from the 5'- and 3'-termini of a 5S-rRNA precursor.. In terms of biological role, required for correct processing of both the 5' and 3' ends of 5S rRNA precursor. Cleaves both sides of a double-stranded region yielding mature 5S rRNA in one step. The chain is Ribonuclease M5 from Streptococcus pneumoniae (strain ATCC BAA-255 / R6).